The primary structure comprises 613 residues: GPI mannosyltransferase 3 (613 aa).

N-linked (GlcNAc...) asparagine glycosylation occurs at asparagine 19. The next 12 membrane-spanning stretches (helical) occupy residues 22-42 (FFLR…ATFF), 83-103 (LFAG…PVGI), 106-126 (ATIL…LGDW), 132-152 (AVSI…LQIF), 168-188 (LEMT…LGVA), 216-236 (LAVV…LFTI), 252-272 (VVTL…ISAA), 280-300 (FWTF…LAVF), 309-329 (YFLQ…VASL), 342-362 (FNVL…LSLI), 369-389 (FIYP…ASFF), and 411-431 (YLFV…FFHQ).

This sequence belongs to the glycosyltransferase 22 family. PIGB subfamily.

The protein localises to the endoplasmic reticulum membrane. It participates in glycolipid biosynthesis; glycosylphosphatidylinositol-anchor biosynthesis. In terms of biological role, mannosyltransferase involved in glycosylphosphatidylinositol-anchor biosynthesis. Transfers the third mannose to Man2-GlcN-acyl-PI during GPI precursor assembly. The sequence is that of GPI mannosyltransferase 3 (GPI10) from Gibberella zeae (strain ATCC MYA-4620 / CBS 123657 / FGSC 9075 / NRRL 31084 / PH-1) (Wheat head blight fungus).